Here is a 734-residue protein sequence, read N- to C-terminus: Transcription factor EMB1444 (734 aa).

The tract at residues 537–566 (QFPTSLEIPKKNKKRAKPGESSRPRPRDRQ) is disordered. Positions 548 to 555 (NKKRAKPG) match the Nuclear localization signal motif. The region spanning 552–601 (AKPGESSRPRPRDRQLIQDRIKELRELVPNGSKCSIDSLLECTIKHMLFL) is the bHLH domain. The segment covering 553–566 (KPGESSRPRPRDRQ) has biased composition (basic and acidic residues).

This sequence belongs to the bHLH protein family. LHW subfamily. Homodimer.

It is found in the nucleus. Transcription factor that may regulate root development. This Arabidopsis thaliana (Mouse-ear cress) protein is Transcription factor EMB1444.